The sequence spans 463 residues: Glutamate-1-semialdehyde 2,1-aminomutase, chloroplastic (463 aa).

The transit peptide at 1–30 (MQMQLNAKTVQGAFKAQRPRSVRGNVAVRA) directs the protein to the chloroplast. Lys303 carries the post-translational modification N6-(pyridoxal phosphate)lysine.

The protein belongs to the class-III pyridoxal-phosphate-dependent aminotransferase family. HemL subfamily. As to quaternary structure, homodimer. Requires pyridoxal 5'-phosphate as cofactor.

It is found in the plastid. Its subcellular location is the chloroplast. It catalyses the reaction (S)-4-amino-5-oxopentanoate = 5-aminolevulinate. The protein operates within porphyrin-containing compound metabolism; protoporphyrin-IX biosynthesis; 5-aminolevulinate from L-glutamyl-tRNA(Glu): step 2/2. It functions in the pathway porphyrin-containing compound metabolism; chlorophyll biosynthesis. The chain is Glutamate-1-semialdehyde 2,1-aminomutase, chloroplastic (GSA) from Chlamydomonas reinhardtii (Chlamydomonas smithii).